We begin with the raw amino-acid sequence, 268 residues long: Tryptophan synthase alpha chain (268 aa).

Catalysis depends on proton acceptor residues E49 and D60.

It belongs to the TrpA family. Tetramer of two alpha and two beta chains.

The catalysed reaction is (1S,2R)-1-C-(indol-3-yl)glycerol 3-phosphate + L-serine = D-glyceraldehyde 3-phosphate + L-tryptophan + H2O. The protein operates within amino-acid biosynthesis; L-tryptophan biosynthesis; L-tryptophan from chorismate: step 5/5. Functionally, the alpha subunit is responsible for the aldol cleavage of indoleglycerol phosphate to indole and glyceraldehyde 3-phosphate. The polypeptide is Tryptophan synthase alpha chain (Escherichia coli O17:K52:H18 (strain UMN026 / ExPEC)).